The chain runs to 853 residues: DNA mismatch repair protein MutS (853 aa).

An ATP-binding site is contributed by 613–620; that stretch reads GPNMGGKS.

This sequence belongs to the DNA mismatch repair MutS family.

In terms of biological role, this protein is involved in the repair of mismatches in DNA. It is possible that it carries out the mismatch recognition step. This protein has a weak ATPase activity. In Vibrio vulnificus (strain YJ016), this protein is DNA mismatch repair protein MutS.